The chain runs to 130 residues: ATP synthase epsilon chain (130 aa).

It belongs to the ATPase epsilon chain family. As to quaternary structure, F-type ATPases have 2 components, CF(1) - the catalytic core - and CF(0) - the membrane proton channel. CF(1) has five subunits: alpha(3), beta(3), gamma(1), delta(1), epsilon(1). CF(0) has three main subunits: a, b and c.

The protein resides in the cell inner membrane. Functionally, produces ATP from ADP in the presence of a proton gradient across the membrane. The chain is ATP synthase epsilon chain from Pelagibacter ubique (strain HTCC1062).